The following is a 247-amino-acid chain: UDP-2,3-diacylglucosamine hydrolase (247 aa).

Mn(2+)-binding residues include Asp-8, His-10, Asp-41, Asn-79, and His-114. 79–80 (NR) contributes to the substrate binding site. Substrate is bound by residues Asp-122, Ser-160, Asp-171, Gln-174, and His-202. Residues His-202 and His-204 each contribute to the Mn(2+) site.

The protein belongs to the LpxH family. The cofactor is Mn(2+).

It is found in the cell inner membrane. It carries out the reaction UDP-2-N,3-O-bis[(3R)-3-hydroxytetradecanoyl]-alpha-D-glucosamine + H2O = 2-N,3-O-bis[(3R)-3-hydroxytetradecanoyl]-alpha-D-glucosaminyl 1-phosphate + UMP + 2 H(+). The protein operates within glycolipid biosynthesis; lipid IV(A) biosynthesis; lipid IV(A) from (3R)-3-hydroxytetradecanoyl-[acyl-carrier-protein] and UDP-N-acetyl-alpha-D-glucosamine: step 4/6. Functionally, hydrolyzes the pyrophosphate bond of UDP-2,3-diacylglucosamine to yield 2,3-diacylglucosamine 1-phosphate (lipid X) and UMP by catalyzing the attack of water at the alpha-P atom. Involved in the biosynthesis of lipid A, a phosphorylated glycolipid that anchors the lipopolysaccharide to the outer membrane of the cell. The chain is UDP-2,3-diacylglucosamine hydrolase from Xanthomonas campestris pv. campestris (strain 8004).